The following is a 761-amino-acid chain: Nitrogen fixation protein FixI (761 aa).

The Cytoplasmic portion of the chain corresponds to 1-120 (MSCCTMDAES…SAPESDKTRN (120 aa)). Residues 36–106 (RQLDLSVSDV…EINSAGYRAH (71 aa)) form the HMA domain. A metal cation-binding residues include cysteine 47 and cysteine 50. Residues 121-142 (QLLLAIGVSGFAAPNIMLLSVS) traverse the membrane as a helical segment. The Extracellular segment spans residues 143–155 (VWSGADAATRDMF). Residues 156 to 177 (HWISAMIAAPALVYAGRFFFKS) form a helical membrane-spanning segment. The Cytoplasmic portion of the chain corresponds to 178-184 (AWNALRH). A helical transmembrane segment spans residues 185-205 (GRTNMDVPISVTVSLSYAVSL). The Extracellular segment spans residues 206–217 (WETVHHGEHAWF). Residues 218–238 (DASVSLLFFLLIGRTLDHIMR) traverse the membrane as a helical segment. Over 239–367 (EKARAAINGL…RARYRRIADR (129 aa)) the chain is Cytoplasmic. A helical membrane pass occupies residues 368–390 (AATLYSPVVHLLALVSFLAWGFL). The Extracellular segment spans residues 391-395 (GGDWK). Residues 396–415 (QAMLVAVAVLIITCPCALGL) traverse the membrane as a helical segment. Residues 416 to 691 (AVPVVQVVAA…AVARRSASLI (276 aa)) lie on the Cytoplasmic side of the membrane. Aspartate 453 acts as the 4-aspartylphosphate intermediate in catalysis. Aspartate 637 and aspartate 641 together coordinate Mg(2+). A helical membrane pass occupies residues 692 to 711 (RQNFALAIGYNVLAVPIAIA). At 712 to 716 (GLATP) the chain is on the extracellular side. The helical transmembrane segment at 717 to 735 (LIAAVAMSTSSIIVVTNAL) threads the bilayer. Residues 736-761 (RLNGFGKRPDMHIRRGIGRSAEVKAA) lie on the Cytoplasmic side of the membrane.

Belongs to the cation transport ATPase (P-type) (TC 3.A.3) family. Type IB subfamily.

The protein localises to the cell membrane. The enzyme catalyses ATP + H2O = ADP + phosphate + H(+). FixI is a pump of a specific cation involved in symbiotic nitrogen fixation. The four proteins FixG, FixH, FixI, and FixS may participate in a membrane-bound complex coupling the FixI cation pump with a redox process catalyzed by FixG. In Rhizobium leguminosarum bv. viciae, this protein is Nitrogen fixation protein FixI (fixI).